A 132-amino-acid chain; its full sequence is Small ribosomal subunit protein uS8 (132 aa).

The protein belongs to the universal ribosomal protein uS8 family. Part of the 30S ribosomal subunit. Contacts proteins S5 and S12.

Its function is as follows. One of the primary rRNA binding proteins, it binds directly to 16S rRNA central domain where it helps coordinate assembly of the platform of the 30S subunit. The polypeptide is Small ribosomal subunit protein uS8 (Streptomyces griseus subsp. griseus (strain JCM 4626 / CBS 651.72 / NBRC 13350 / KCC S-0626 / ISP 5235)).